The sequence spans 728 residues: Ribosome biogenesis protein bop1-A (728 aa).

A disordered region spans residues M1 to I114. Residues S55–E67 are compositionally biased toward acidic residues. A compositionally biased stretch (basic and acidic residues) spans N68–I77. WD repeat units lie at residues G393–S432, V434–C474, K514–P556, K559–K597, T600–K639, H643–Q682, and H698–T728.

This sequence belongs to the WD repeat BOP1/ERB1 family. In terms of assembly, component of the PeBoW complex, composed of bop1, pes1 and wdr12. The complex is held together by bop1, which interacts with pes1 via its N-terminal domain and with wdr12 via a high-affinity interaction between the seven-bladed beta-propeller domains of the 2 proteins. The PeBoW complex associates with the 66S pre-ribosome.

Its subcellular location is the nucleus. The protein localises to the nucleolus. The protein resides in the nucleoplasm. In terms of biological role, component of the PeBoW complex, which is required for maturation of 28S and 5.8S ribosomal RNAs and formation of the 60S ribosome. This is Ribosome biogenesis protein bop1-A (bop1-a) from Xenopus laevis (African clawed frog).